The primary structure comprises 528 residues: Potassium voltage-gated channel subfamily A member 3 (528 aa).

Residues 1 to 32 are disordered; it reads MTVVPGDHLLEPEAAGGGGGDPPQGGCGSGGG. Over 1-187 the chain is Cytoplasmic; sequence MTVVPGDHLL…EYPESSGPAR (187 aa). Over residues 15–32 the composition is skewed to gly residues; that stretch reads AGGGGGDPPQGGCGSGGG. The chain crosses the membrane as a helical span at residues 188-206; sequence GIAIVSVLVILISIVIFCL. Over 207–247 the chain is Extracellular; sequence ETLPEFRDEKDYPASPSQDVFEAANNSTSGAPSGASSFSDP. Asparagine 232 carries N-linked (GlcNAc...) asparagine glycosylation. A helical transmembrane segment spans residues 248 to 269; sequence FFVVETLCIIWFSFELLVRFFA. The S-palmitoyl cysteine moiety is linked to residue cysteine 270. At 270-280 the chain is on the cytoplasmic side; that stretch reads CPSKATFSRNI. The helical transmembrane segment at 281-301 threads the bilayer; sequence MNLIDIVAIIPYFITLGTELA. Residues 302-315 lie on the Extracellular side of the membrane; it reads ERQGNGQQAMSLAI. A helical; Voltage-sensor membrane pass occupies residues 316 to 334; sequence LRVIRLVRVFRIFKLSRHS. Residues 335 to 350 lie on the Cytoplasmic side of the membrane; it reads KGLQILGQTLKASMRE. The chain crosses the membrane as a helical span at residues 351-370; the sequence is LGLLIFFLFIGVILFSSAVY. The Extracellular segment spans residues 371–411; it reads FAEADDPSSGFNSIPDAFWWAVVTMTTVGYGDMHPVTIGGK. Residues 397–402 carry the Selectivity filter motif; the sequence is TVGYGD. The chain crosses the membrane as a helical span at residues 412–434; the sequence is IVGSLCAIAGVLTIALPVPVIVS. The Cytoplasmic portion of the chain corresponds to 435–528; sequence NFNYFYHRET…VNIKKIFTDV (94 aa). Residues 435–528 form an interaction with KCNE4 region; sequence NFNYFYHRET…VNIKKIFTDV (94 aa). Tyrosine 452 is subject to Phosphotyrosine. Serine 473 carries the phosphoserine; by PKA modification. Positions 526–528 match the PDZ-binding motif; the sequence is TDV.

It belongs to the potassium channel family. A (Shaker) (TC 1.A.1.2) subfamily. Kv1.3/KCNA3 sub-subfamily. As to quaternary structure, homotetramer. Forms heterooligomers with KCNE4 which inhibits KCNA3 activity by impairing localization to the cell membrane. The stoichiometry of KCNA3 and KCNE4 in the heterooligomers are 4:1, 4:2, 4:3 or 4:4 respectively. Increasing the number of KCNE4 subunits steadily slows the activation KCNA3 and decreases its abundance at the cell membrane. However, a single subunit of KCNE4 is sufficient for the cooperative enhancement of the inactivating function of the channel. Interacts with SEC24D; this interaction is reduced in the presence of KCNE4. Interacts with DLG1, DLG2 and DLG4 via their PDZ domains. In terms of processing, N-glycosylation promotes the cell surface expression. Phosphorylation on Tyr-452 inhibits its channel activity.

It localises to the cell membrane. It carries out the reaction K(+)(in) = K(+)(out). Activity is up-regulated by JAK2. Its function is as follows. Mediates the voltage-dependent potassium ion permeability of excitable membranes. Assuming opened or closed conformations in response to the voltage difference across the membrane, the protein forms a potassium-selective channel through which potassium ions may pass in accordance with their electrochemical gradient. The polypeptide is Potassium voltage-gated channel subfamily A member 3 (Kcna3) (Mus musculus (Mouse)).